Reading from the N-terminus, the 308-residue chain is 4-hydroxyproline 2-epimerase (308 aa).

The active-site Proton acceptor is the Cys-88. Residues 89 to 90, His-208, and Asp-232 each bind substrate; that span reads GH. The Proton donor role is filled by Cys-236. Residue 237–238 participates in substrate binding; that stretch reads GT.

Belongs to the proline racemase family.

It catalyses the reaction trans-4-hydroxy-L-proline = cis-4-hydroxy-D-proline. Functionally, catalyzes the epimerization of trans-4-hydroxy-L-proline (t4LHyp) to cis-4-hydroxy-D-proline (c4DHyp). Is likely involved in a degradation pathway that converts t4LHyp to alpha-ketoglutarate. Can also catalyze the epimerization of trans-3-hydroxy-L-proline (t3LHyp) to cis-3-hydroxy-D-proline (c3DHyp), albeit with 19-fold lower efficiency. Displays no proline racemase activity. The chain is 4-hydroxyproline 2-epimerase from Chromobacterium violaceum (strain ATCC 12472 / DSM 30191 / JCM 1249 / CCUG 213 / NBRC 12614 / NCIMB 9131 / NCTC 9757 / MK).